The sequence spans 175 residues: Lipoprotein signal peptidase (175 aa).

The next 4 membrane-spanning stretches (helical) occupy residues 25–45, 56–76, 81–101, and 110–130; these read LWMA…IVIV, VTGF…SFLA, WQRW…VWLL, and FCFA…DRVV. Residues D136 and D154 contribute to the active site. Residues 146–166 form a helical membrane-spanning segment; it reads HWPAFNVADCAITVGAVLLIV.

This sequence belongs to the peptidase A8 family.

It is found in the cell inner membrane. It catalyses the reaction Release of signal peptides from bacterial membrane prolipoproteins. Hydrolyzes -Xaa-Yaa-Zaa-|-(S,diacylglyceryl)Cys-, in which Xaa is hydrophobic (preferably Leu), and Yaa (Ala or Ser) and Zaa (Gly or Ala) have small, neutral side chains.. It functions in the pathway protein modification; lipoprotein biosynthesis (signal peptide cleavage). Its function is as follows. This protein specifically catalyzes the removal of signal peptides from prolipoproteins. The protein is Lipoprotein signal peptidase of Cupriavidus necator (strain ATCC 17699 / DSM 428 / KCTC 22496 / NCIMB 10442 / H16 / Stanier 337) (Ralstonia eutropha).